The chain runs to 428 residues: Chaperone SurA (428 aa).

An N-terminal signal peptide occupies residues 1-13 (MLGALLLSGAVHA). 2 consecutive PpiC domains span residues 164-265 (SEEF…KLLE) and 276-375 (RDEV…EVLG).

Its subcellular location is the periplasm. It carries out the reaction [protein]-peptidylproline (omega=180) = [protein]-peptidylproline (omega=0). Functionally, chaperone involved in the correct folding and assembly of outer membrane proteins. Recognizes specific patterns of aromatic residues and the orientation of their side chains, which are found more frequently in integral outer membrane proteins. May act in both early periplasmic and late outer membrane-associated steps of protein maturation. The protein is Chaperone SurA of Pseudomonas savastanoi pv. phaseolicola (strain 1448A / Race 6) (Pseudomonas syringae pv. phaseolicola (strain 1448A / Race 6)).